The sequence spans 350 residues: Nicotinate-nucleotide--dimethylbenzimidazole phosphoribosyltransferase (350 aa).

Glu318 acts as the Proton acceptor in catalysis.

Belongs to the CobT family.

The catalysed reaction is 5,6-dimethylbenzimidazole + nicotinate beta-D-ribonucleotide = alpha-ribazole 5'-phosphate + nicotinate + H(+). It participates in nucleoside biosynthesis; alpha-ribazole biosynthesis; alpha-ribazole from 5,6-dimethylbenzimidazole: step 1/2. Catalyzes the synthesis of alpha-ribazole-5'-phosphate from nicotinate mononucleotide (NAMN) and 5,6-dimethylbenzimidazole (DMB). This chain is Nicotinate-nucleotide--dimethylbenzimidazole phosphoribosyltransferase, found in Citrifermentans bemidjiense (strain ATCC BAA-1014 / DSM 16622 / JCM 12645 / Bem) (Geobacter bemidjiensis).